We begin with the raw amino-acid sequence, 55 residues long: Large ribosomal subunit protein bL33 (55 aa).

It belongs to the bacterial ribosomal protein bL33 family.

This Nitrobacter hamburgensis (strain DSM 10229 / NCIMB 13809 / X14) protein is Large ribosomal subunit protein bL33 (rpmG).